A 199-amino-acid polypeptide reads, in one-letter code: Glycerol-3-phosphate acyltransferase (199 aa).

5 helical membrane passes run 5-25, 54-74, 82-102, 114-134, and 154-174; these read AYLL…IIFC, AAIG…LIAF, AIGL…FFQF, VFFS…LIVF, and YIWC…CLLI.

Belongs to the PlsY family. Probably interacts with PlsX.

It is found in the cell inner membrane. It catalyses the reaction an acyl phosphate + sn-glycerol 3-phosphate = a 1-acyl-sn-glycero-3-phosphate + phosphate. It participates in lipid metabolism; phospholipid metabolism. In terms of biological role, catalyzes the transfer of an acyl group from acyl-phosphate (acyl-PO(4)) to glycerol-3-phosphate (G3P) to form lysophosphatidic acid (LPA). This enzyme utilizes acyl-phosphate as fatty acyl donor, but not acyl-CoA or acyl-ACP. This is Glycerol-3-phosphate acyltransferase from Haemophilus ducreyi (strain 35000HP / ATCC 700724).